The following is a 167-amino-acid chain: Ribosome maturation factor RimM (167 aa).

The PRC barrel domain occupies 94–165 (ENEFYYSDII…KIIITPMEGL (72 aa)).

This sequence belongs to the RimM family. In terms of assembly, binds ribosomal protein uS19.

The protein resides in the cytoplasm. Its function is as follows. An accessory protein needed during the final step in the assembly of 30S ribosomal subunit, possibly for assembly of the head region. Essential for efficient processing of 16S rRNA. May be needed both before and after RbfA during the maturation of 16S rRNA. It has affinity for free ribosomal 30S subunits but not for 70S ribosomes. The protein is Ribosome maturation factor RimM of Staphylococcus aureus (strain NCTC 8325 / PS 47).